Here is a 406-residue protein sequence, read N- to C-terminus: 2,3-bisphosphoglycerate-independent phosphoglycerate mutase (406 aa).

It belongs to the BPG-independent phosphoglycerate mutase family. A-PGAM subfamily.

It catalyses the reaction (2R)-2-phosphoglycerate = (2R)-3-phosphoglycerate. It functions in the pathway carbohydrate degradation; glycolysis; pyruvate from D-glyceraldehyde 3-phosphate: step 3/5. In terms of biological role, catalyzes the interconversion of 2-phosphoglycerate and 3-phosphoglycerate. This Methanococcus maripaludis (strain DSM 14266 / JCM 13030 / NBRC 101832 / S2 / LL) protein is 2,3-bisphosphoglycerate-independent phosphoglycerate mutase.